The chain runs to 141 residues: Nucleoside diphosphate kinase (141 aa).

Residues Lys11, Phe59, Arg87, Thr93, Arg104, and Asn114 each contribute to the ATP site. The active-site Pros-phosphohistidine intermediate is His117.

The protein belongs to the NDK family. Homotetramer. Mg(2+) is required as a cofactor.

It is found in the cytoplasm. The enzyme catalyses a 2'-deoxyribonucleoside 5'-diphosphate + ATP = a 2'-deoxyribonucleoside 5'-triphosphate + ADP. It catalyses the reaction a ribonucleoside 5'-diphosphate + ATP = a ribonucleoside 5'-triphosphate + ADP. Functionally, major role in the synthesis of nucleoside triphosphates other than ATP. The ATP gamma phosphate is transferred to the NDP beta phosphate via a ping-pong mechanism, using a phosphorylated active-site intermediate. This Burkholderia ambifaria (strain MC40-6) protein is Nucleoside diphosphate kinase.